The primary structure comprises 508 residues: Pyruvate kinase (508 aa).

R56 serves as a coordination point for substrate. K(+) is bound by residues N58, S60, D90, and T91. Residue 58 to 61 (NFSH) participates in ATP binding. ATP is bound by residues R97 and K185. E251 contributes to the Mg(2+) binding site. The substrate site is built by G274, D275, and T307. Position 275 (D275) interacts with Mg(2+).

The protein belongs to the pyruvate kinase family. In terms of assembly, homotetramer. It depends on Mg(2+) as a cofactor. The cofactor is K(+).

It catalyses the reaction pyruvate + ATP = phosphoenolpyruvate + ADP + H(+). Its pathway is carbohydrate degradation; glycolysis; pyruvate from D-glyceraldehyde 3-phosphate: step 5/5. Regulated by phosphoenolpyruvate substrate and is allosterically activated by ribose-5-phosphate, AMP and other nucleoside monophosphates but not by fructose-1,6-bisphosphate. In Mycoplasma pneumoniae (strain ATCC 29342 / M129 / Subtype 1) (Mycoplasmoides pneumoniae), this protein is Pyruvate kinase (pyk).